A 326-amino-acid polypeptide reads, in one-letter code: N-acetyl-gamma-glutamyl-phosphate reductase (326 aa).

Residue Cys-155 is part of the active site.

It belongs to the NAGSA dehydrogenase family. Type 1 subfamily.

It is found in the cytoplasm. It catalyses the reaction N-acetyl-L-glutamate 5-semialdehyde + phosphate + NADP(+) = N-acetyl-L-glutamyl 5-phosphate + NADPH + H(+). It participates in amino-acid biosynthesis; L-arginine biosynthesis; N(2)-acetyl-L-ornithine from L-glutamate: step 3/4. Functionally, catalyzes the NADPH-dependent reduction of N-acetyl-5-glutamyl phosphate to yield N-acetyl-L-glutamate 5-semialdehyde. The chain is N-acetyl-gamma-glutamyl-phosphate reductase from Shewanella frigidimarina (strain NCIMB 400).